The primary structure comprises 452 residues: Pup--protein ligase (452 aa).

A Mg(2+)-binding site is contributed by glutamate 9. Arginine 53 serves as a coordination point for ATP. Residue tyrosine 55 coordinates Mg(2+). Catalysis depends on aspartate 57, which acts as the Proton acceptor. Glutamate 63 contacts Mg(2+). ATP-binding residues include threonine 66 and tryptophan 419.

The protein belongs to the Pup ligase/Pup deamidase family. Pup-conjugating enzyme subfamily.

It catalyses the reaction ATP + [prokaryotic ubiquitin-like protein]-L-glutamate + [protein]-L-lysine = ADP + phosphate + N(6)-([prokaryotic ubiquitin-like protein]-gamma-L-glutamyl)-[protein]-L-lysine.. Its pathway is protein degradation; proteasomal Pup-dependent pathway. It participates in protein modification; protein pupylation. In terms of biological role, catalyzes the covalent attachment of the prokaryotic ubiquitin-like protein modifier Pup to the proteasomal substrate proteins, thereby targeting them for proteasomal degradation. This tagging system is termed pupylation. The ligation reaction involves the side-chain carboxylate of the C-terminal glutamate of Pup and the side-chain amino group of a substrate lysine. The sequence is that of Pup--protein ligase from Acidothermus cellulolyticus (strain ATCC 43068 / DSM 8971 / 11B).